The sequence spans 481 residues: Argininosuccinate synthase (481 aa).

ATP contacts are provided by residues 17-25 (AFSGGLDTS) and Ala43. Tyr99 provides a ligand contact to L-citrulline. Residues Gly129 and Thr131 each contribute to the ATP site. L-aspartate contacts are provided by Thr131, Asn135, and Asp136. Asn135 is an L-citrulline binding site. Residue Asp136 coordinates ATP. L-citrulline-binding residues include Arg139 and Ser192. Residue Asp194 coordinates ATP. L-citrulline contacts are provided by Thr201, Glu203, and Glu280.

The protein belongs to the argininosuccinate synthase family. Type 2 subfamily. In terms of assembly, homotetramer.

Its subcellular location is the cytoplasm. The catalysed reaction is L-citrulline + L-aspartate + ATP = 2-(N(omega)-L-arginino)succinate + AMP + diphosphate + H(+). Its pathway is amino-acid biosynthesis; L-arginine biosynthesis; L-arginine from L-ornithine and carbamoyl phosphate: step 2/3. The sequence is that of Argininosuccinate synthase (argG) from Streptomyces coelicolor (strain ATCC BAA-471 / A3(2) / M145).